The sequence spans 522 residues: ATP synthase subunit alpha, mitochondrial (522 aa).

Residue 172–179 (GDRQTGKT) coordinates ATP.

It belongs to the ATPase alpha/beta chains family. In terms of assembly, F-type ATPases have 2 components, CF(1) - the catalytic core - and CF(0) - the membrane proton channel. CF(1) has five subunits: alpha(3), beta(3), gamma(1), delta(1), epsilon(1). CF(0) has three main subunits: a, b and c.

The protein resides in the mitochondrion. Its subcellular location is the mitochondrion inner membrane. Mitochondrial membrane ATP synthase (F(1)F(0) ATP synthase or Complex V) produces ATP from ADP in the presence of a proton gradient across the membrane which is generated by electron transport complexes of the respiratory chain. F-type ATPases consist of two structural domains, F(1) - containing the extramembraneous catalytic core, and F(0) - containing the membrane proton channel, linked together by a central stalk and a peripheral stalk. During catalysis, ATP synthesis in the catalytic domain of F(1) is coupled via a rotary mechanism of the central stalk subunits to proton translocation. Subunits alpha and beta form the catalytic core in F(1). Rotation of the central stalk against the surrounding alpha(3)beta(3) subunits leads to hydrolysis of ATP in three separate catalytic sites on the beta subunits. Subunit alpha does not bear the catalytic high-affinity ATP-binding sites. This is ATP synthase subunit alpha, mitochondrial (ATP1) from Acanthamoeba castellanii (Amoeba).